The sequence spans 61 residues: Conotoxin TxMRCL-04 (61 aa).

An N-terminal signal peptide occupies residues 1 to 22; that stretch reads MRCLPVFVILLLLIASTPSVDA. A propeptide spanning residues 23-46 is cleaved from the precursor; that stretch reads QLKTKDDMSLASFHDNVKRILQIR.

This sequence belongs to the conotoxin T superfamily. Post-translationally, contains 2 disulfide bonds that can be either 'C1-C3, C2-C4' or 'C1-C4, C2-C3', since these disulfide connectivities have been observed for conotoxins with cysteine framework V (for examples, see AC P0DQQ7 and AC P81755). Expressed by the venom duct.

The protein localises to the secreted. The polypeptide is Conotoxin TxMRCL-04 (Conus textile (Cloth-of-gold cone)).